The primary structure comprises 395 residues: Transcription termination/antitermination protein NusA (395 aa).

The S1 motif domain occupies 137 to 201; sequence NSVLMGQVIL…TKKGLLLELS (65 aa). KH domains follow at residues 243–291 and 331–378; these read SHNA…TLAL and KVRL…NESE.

It belongs to the NusA family. As to quaternary structure, monomer. Binds directly to the core enzyme of the DNA-dependent RNA polymerase and to nascent RNA.

It is found in the cytoplasm. Participates in both transcription termination and antitermination. This is Transcription termination/antitermination protein NusA from Helicobacter pylori (strain ATCC 700392 / 26695) (Campylobacter pylori).